The sequence spans 244 residues: Electron transfer flavoprotein beta subunit lysine methyltransferase homolog (244 aa).

The protein belongs to the methyltransferase superfamily. ETFBKMT family.

Its function is as follows. Probable methyltransferase. The polypeptide is Electron transfer flavoprotein beta subunit lysine methyltransferase homolog (Caenorhabditis elegans).